The chain runs to 1478 residues: Fanconi anemia group D2 protein homolog (1478 aa).

A disordered region spans residues 33 to 53; sequence NISVESSSGGSEENIPASQEH. Over residues 35–45 the composition is skewed to low complexity; the sequence is SVESSSGGSEE. A Glycyl lysine isopeptide (Lys-Gly) (interchain with G-Cter in ubiquitin) cross-link involves residue Lys-595. 2 disordered regions span residues 896–918 and 1420–1478; these read NQNQ…PEPD and TPRS…SKCF. Over residues 1429-1442 the composition is skewed to acidic residues; that stretch reads ENSDDELPADDTSV. Residues 1468-1478 are compositionally biased toward basic residues; sequence RSKSSSRSKCF.

It belongs to the Fanconi anemia protein FANCD2 family. As to quaternary structure, homodimer; cannot be ubiquitinated and does not bind DNA. Part of a Fanci-Fancd2 heterodimeric complex that binds and scans dsDNA for DNA damage. Interacts with Fancl (via C-terminus). Post-translationally, monoubiquitinated by Fancl in response to ionising radiation.

The protein resides in the nucleus. In terms of biological role, required for maintenance of chromosomal stability. Together with Fancl, and probably Fanci, involved in DNA repair of damage caused by agents that induce interstrand cross-links but not agents that cause double strand breaks. Required for S phase checkpoint activation in response to ionizing radiation induced DNA damage. The polypeptide is Fanconi anemia group D2 protein homolog (Drosophila melanogaster (Fruit fly)).